Reading from the N-terminus, the 134-residue chain is Secreted RxLR effector protein 1 (134 aa).

An N-terminal signal peptide occupies residues 1 to 22 (MFCRSPLVAVILLVLATHIVLA). Residues 32–60 (SETVPSDSSQTTRKSTRRTTSVDNKRRLR) form a disordered region. Over residues 37 to 52 (SDSSQTTRKSTRRTTS) the composition is skewed to low complexity. A RxLR-dEER motif is present at residues 57 to 79 (RRLRQQIMGKDGPVVNDVHAEER).

Belongs to the RxLR effector family.

Its subcellular location is the secreted. The protein resides in the host nucleus. Its function is as follows. Effector that acts as a broad suppressor of cell death to interrupt plant immunity. Inhibits cell death induced by cell death-inducing proteins, including the PAMP elicitor INF1 from P.infestans. The chain is Secreted RxLR effector protein 1 from Plasmopara viticola (Downy mildew of grapevine).